The primary structure comprises 242 residues: tRNA (guanine-N(7)-)-methyltransferase (242 aa).

Positions 66, 91, 118, and 141 each coordinate S-adenosyl-L-methionine. Residue aspartate 141 is part of the active site. Residues lysine 145, aspartate 177, and 214 to 217 (TKFE) contribute to the substrate site.

The protein belongs to the class I-like SAM-binding methyltransferase superfamily. TrmB family. Monomer.

The catalysed reaction is guanosine(46) in tRNA + S-adenosyl-L-methionine = N(7)-methylguanosine(46) in tRNA + S-adenosyl-L-homocysteine. It participates in tRNA modification; N(7)-methylguanine-tRNA biosynthesis. In terms of biological role, catalyzes the formation of N(7)-methylguanine at position 46 (m7G46) in tRNA. The protein is tRNA (guanine-N(7)-)-methyltransferase of Buchnera aphidicola subsp. Baizongia pistaciae (strain Bp).